Here is a 359-residue protein sequence, read N- to C-terminus: Phosphoribosylformylglycinamidine cyclo-ligase (359 aa).

The protein belongs to the AIR synthase family.

Its subcellular location is the cytoplasm. The catalysed reaction is 2-formamido-N(1)-(5-O-phospho-beta-D-ribosyl)acetamidine + ATP = 5-amino-1-(5-phospho-beta-D-ribosyl)imidazole + ADP + phosphate + H(+). It participates in purine metabolism; IMP biosynthesis via de novo pathway; 5-amino-1-(5-phospho-D-ribosyl)imidazole from N(2)-formyl-N(1)-(5-phospho-D-ribosyl)glycinamide: step 2/2. The chain is Phosphoribosylformylglycinamidine cyclo-ligase from Brucella canis (strain ATCC 23365 / NCTC 10854 / RM-666).